We begin with the raw amino-acid sequence, 540 residues long: MAKEIKFSEDARSKMLKGVDKLANTVKSTIGPKGRNVVLEQSYGSPTITNDGVTIAKATDLEDHFENMGAKLVSEVASKTNDIAGDGTTTATVLTQAIVNEGMKNVTAGANPVGIRRGIELATKAAVDALHEMSHTVESKSDIAQVASISSANEEVGKLIADAMEKVGNDGVITIEESKGIDTSLDVVEGMQFDRGYLSQYMVTDNDKMEADLDNPYILLTDKKISNIQEVLPLLQSIVQQGRPLLIIADDVDGEALPTLVLNKIRGTFNVVAVKAPGFGDRRKAMLQDIATLTGATVITDDLGLQLKDTTVEQLGSAGKVTVTKENTTIVEGAGDKDKIAERVEQIKKQISETTSDFDREKLQERLAKLSGGVAVIKVGAATETELKERKYRIEDALNATRAAVEEGFVPGGGTALVNVIGKVAALEEEGDVQTGINIVKRALEEPVRQIAENAGLEGSVIVEKLKEQKPGVGFNAATNEWVDMVEAGIVDPTKVTRSALQNAASVSALLLTTEAVVADKPEPESNNQMPATPGMGGMM.

ATP-binding positions include 29–32 (TIGP), 86–90 (DGTTT), glycine 413, 476–478 (NAA), and aspartate 492. A disordered region spans residues 520–540 (DKPEPESNNQMPATPGMGGMM).

Belongs to the chaperonin (HSP60) family. In terms of assembly, forms a cylinder of 14 subunits composed of two heptameric rings stacked back-to-back. Interacts with the co-chaperonin GroES.

Its subcellular location is the cytoplasm. It catalyses the reaction ATP + H2O + a folded polypeptide = ADP + phosphate + an unfolded polypeptide.. Together with its co-chaperonin GroES, plays an essential role in assisting protein folding. The GroEL-GroES system forms a nano-cage that allows encapsulation of the non-native substrate proteins and provides a physical environment optimized to promote and accelerate protein folding. This chain is Chaperonin GroEL, found in Ligilactobacillus salivarius (strain UCC118) (Lactobacillus salivarius).